The primary structure comprises 374 residues: Formylglycine-generating enzyme (374 aa).

The N-terminal stretch at 1-33 (MAAPALGPARGCGAELTLVLLLSLFLLLGWAAG) is a signal peptide. An intrachain disulfide couples cysteine 50 to cysteine 52. The interval 57-102 (RPGAQGSSAAAHRYSREANAPGSVPGGRPSPPTKMVPIPAGVFTMG) is disordered. Residue glutamate 130 participates in Ca(2+) binding. N-linked (GlcNAc...) asparagine glycosylation is present at asparagine 141. Intrachain disulfides connect cysteine 218-cysteine 365 and cysteine 235-cysteine 346. 8 residues coordinate Ca(2+): asparagine 259, isoleucine 260, aspartate 273, phenylalanine 275, asparagine 293, glycine 296, alanine 298, and glutamate 300. Residues cysteine 336 and cysteine 341 each coordinate Cu(2+). The interval 341-360 (CYRYRCAARSQNTPDSSASN) is interaction with sulfatases.

This sequence belongs to the sulfatase-modifying factor family. Monomer, homodimer and heterodimer with SUMF2. Cu(2+) serves as cofactor. Post-translationally, N-glycosylated. Contains high-mannose-type oligosaccharides.

It localises to the endoplasmic reticulum lumen. It carries out the reaction L-cysteinyl-[sulfatase] + 2 a thiol + O2 = an organic disulfide + 3-oxo-L-alanyl-[sulfatase] + hydrogen sulfide + H2O + H(+). It participates in protein modification; sulfatase oxidation. Its function is as follows. Oxidase that catalyzes the conversion of cysteine to 3-oxoalanine on target proteins, using molecular oxygen and an unidentified reducing agent. 3-oxoalanine modification, which is also named formylglycine (fGly), occurs in the maturation of arylsulfatases and some alkaline phosphatases that use the hydrated form of 3-oxoalanine as a catalytic nucleophile. Known substrates include GALNS, ARSA, STS and ARSE. The sequence is that of Formylglycine-generating enzyme from Bos taurus (Bovine).